Here is a 318-residue protein sequence, read N- to C-terminus: Protoheme IX farnesyltransferase (318 aa).

The next 9 membrane-spanning stretches (helical) occupy residues 27–47, 52–72, 103–123, 124–144, 152–172, 179–199, 225–245, 248–268, and 288–308; these read IMML…GMTG, PAMA…AGAI, LTMG…ASNW, LAAA…TMWL, IVIG…AVTG, WILF…LSLL, ILVY…TGLG, IYGA…VAIL, and AFLF…VEHA.

The protein belongs to the UbiA prenyltransferase family. Protoheme IX farnesyltransferase subfamily. As to quaternary structure, interacts with CtaA.

Its subcellular location is the cell inner membrane. The catalysed reaction is heme b + (2E,6E)-farnesyl diphosphate + H2O = Fe(II)-heme o + diphosphate. It participates in porphyrin-containing compound metabolism; heme O biosynthesis; heme O from protoheme: step 1/1. Functionally, converts heme B (protoheme IX) to heme O by substitution of the vinyl group on carbon 2 of heme B porphyrin ring with a hydroxyethyl farnesyl side group. This is Protoheme IX farnesyltransferase from Hyphomonas neptunium (strain ATCC 15444).